A 442-amino-acid polypeptide reads, in one-letter code: Elongation factor 1-alpha (442 aa).

In terms of domain architecture, tr-type G spans 6 to 229 (KPHMNLIVIG…ALDNLKPPSV (224 aa)). The interval 15–22 (GHVDHGKS) is G1. Position 15–22 (15–22 (GHVDHGKS)) interacts with GTP. Ser22 is a Mg(2+) binding site. The G2 stretch occupies residues 71–75 (GVTID). Residues 92 to 95 (DAPG) form a G3 region. Residues 92–96 (DAPGH) and 154–157 (NKMD) each bind GTP. Residues 154–157 (NKMD) are G4. The interval 195–197 (SAW) is G5.

The protein belongs to the TRAFAC class translation factor GTPase superfamily. Classic translation factor GTPase family. EF-Tu/EF-1A subfamily.

It localises to the cytoplasm. The catalysed reaction is GTP + H2O = GDP + phosphate + H(+). GTP hydrolase that promotes the GTP-dependent binding of aminoacyl-tRNA to the A-site of ribosomes during protein biosynthesis. The protein is Elongation factor 1-alpha of Ignicoccus hospitalis (strain KIN4/I / DSM 18386 / JCM 14125).